A 182-amino-acid polypeptide reads, in one-letter code: CDP-diacylglycerol--glycerol-3-phosphate 3-phosphatidyltransferase (182 aa).

Over 2–12 the chain is Cytoplasmic; the sequence is QFNIPTLLTLF. A helical membrane pass occupies residues 13 to 37; it reads RVILIPFFVLVFYLPVTWSPFAAAL. The Periplasmic segment spans residues 38 to 60; the sequence is IFCVAAVTDWFDGFLARRWNQST. The helical transmembrane segment at 61 to 81 threads the bilayer; it reads RFGAFLDPVADKVLVAIAMVL. The Cytoplasmic portion of the chain corresponds to 82-86; sequence VTEHY. The helical transmembrane segment at 87-107 threads the bilayer; the sequence is HSWWVTLPAATMIAREIIISA. Residues 108–145 are Periplasmic-facing; that stretch reads LREWMAELGKRSSVAVSWIGKVKTTAQMVALAWLLWRP. Residues 146-168 traverse the membrane as a helical segment; that stretch reads NIWVEYVGIALFFVAAVLTLWSM. Over 169–181 the chain is Cytoplasmic; it reads LQYLSAARADLLD.

The protein belongs to the CDP-alcohol phosphatidyltransferase class-I family.

The protein resides in the cell inner membrane. The enzyme catalyses a CDP-1,2-diacyl-sn-glycerol + sn-glycerol 3-phosphate = a 1,2-diacyl-sn-glycero-3-phospho-(1'-sn-glycero-3'-phosphate) + CMP + H(+). It functions in the pathway phospholipid metabolism; phosphatidylglycerol biosynthesis; phosphatidylglycerol from CDP-diacylglycerol: step 1/2. In terms of biological role, catalyzes the conversion of cytidine diphosphate diacylglycerol (CDP-DG) and glycerol 3-phosphate into phosphatidylglycerol. Essential for the synthesis of anionic phospholipids, thereby playing a role in balancing the ratio of zwitterionic and anionic phospholipids, which is thought to be important for normal membrane function. This Shigella boydii serotype 4 (strain Sb227) protein is CDP-diacylglycerol--glycerol-3-phosphate 3-phosphatidyltransferase.